A 399-amino-acid polypeptide reads, in one-letter code: Glutathione S-transferase LANCL1 (399 aa).

A2 bears the N-acetylalanine mark. K142 carries the N6-acetyllysine modification. C276 contacts Zn(2+). K317 serves as a coordination point for glutathione. Zn(2+) is bound by residues C322 and H323. Residue 364-367 (RTPD) coordinates glutathione.

The protein belongs to the LanC-like protein family. As to quaternary structure, interacts with the C-terminal of STOM. Interacts with the EPS8 SH3 domain. Interaction with EPS8 is inhibited by glutathione binding. Expressed in brain.

The protein localises to the cytoplasm. The protein resides in the cell membrane. It carries out the reaction RX + glutathione = an S-substituted glutathione + a halide anion + H(+). It catalyses the reaction 1-chloro-2,4-dinitrobenzene + glutathione = 2,4-dinitrophenyl-S-glutathione + chloride + H(+). Functionally, functions as a glutathione transferase. Catalyzes conjugation of the glutathione (GSH) to artificial substrates 1-chloro-2,4-dinitrobenzene (CDNB) and p-nitrophenyl acetate. Mitigates neuronal oxidative stress during normal postnatal development and in response to oxidative stresses probably through GSH antioxidant defense mechanism. May play a role in EPS8 signaling. Binds glutathione. In Bos taurus (Bovine), this protein is Glutathione S-transferase LANCL1 (LANCL1).